The following is a 98-amino-acid chain: NADH-ubiquinone oxidoreductase chain 4L (98 aa).

Helical transmembrane passes span 1–21 (MIPT…GMLT), 27–47 (VASL…TALI), and 61–81 (IILL…LISI).

Belongs to the complex I subunit 4L family. In terms of assembly, core subunit of respiratory chain NADH dehydrogenase (Complex I) which is composed of 45 different subunits.

It is found in the mitochondrion inner membrane. The catalysed reaction is a ubiquinone + NADH + 5 H(+)(in) = a ubiquinol + NAD(+) + 4 H(+)(out). Core subunit of the mitochondrial membrane respiratory chain NADH dehydrogenase (Complex I) which catalyzes electron transfer from NADH through the respiratory chain, using ubiquinone as an electron acceptor. Part of the enzyme membrane arm which is embedded in the lipid bilayer and involved in proton translocation. In Macaca sylvanus (Barbary macaque), this protein is NADH-ubiquinone oxidoreductase chain 4L (MT-ND4L).